We begin with the raw amino-acid sequence, 663 residues long: UvrABC system protein B (663 aa).

One can recognise a Helicase ATP-binding domain in the interval 27–414 (KNIENGVKDQ…SDNHIAEQLI (388 aa)). Residue 40–47 (GVTGSGKT) coordinates ATP. The short motif at 93–116 (YYDYYQPEAYIKTTDTYIEKDSSV) is the Beta-hairpin element. The region spanning 432-594 (QVDDLLDEIR…IDPKSIIKEI (163 aa)) is the Helicase C-terminal domain. Residues 624–659 (EKEITKLEKKIKKLVEELDFEQAIILRDEMLKLKEL) form the UVR domain.

It belongs to the UvrB family. In terms of assembly, forms a heterotetramer with UvrA during the search for lesions. Interacts with UvrC in an incision complex.

The protein resides in the cytoplasm. In terms of biological role, the UvrABC repair system catalyzes the recognition and processing of DNA lesions. A damage recognition complex composed of 2 UvrA and 2 UvrB subunits scans DNA for abnormalities. Upon binding of the UvrA(2)B(2) complex to a putative damaged site, the DNA wraps around one UvrB monomer. DNA wrap is dependent on ATP binding by UvrB and probably causes local melting of the DNA helix, facilitating insertion of UvrB beta-hairpin between the DNA strands. Then UvrB probes one DNA strand for the presence of a lesion. If a lesion is found the UvrA subunits dissociate and the UvrB-DNA preincision complex is formed. This complex is subsequently bound by UvrC and the second UvrB is released. If no lesion is found, the DNA wraps around the other UvrB subunit that will check the other stand for damage. This is UvrABC system protein B from Fusobacterium nucleatum subsp. nucleatum (strain ATCC 25586 / DSM 15643 / BCRC 10681 / CIP 101130 / JCM 8532 / KCTC 2640 / LMG 13131 / VPI 4355).